The primary structure comprises 198 residues: FMN-dependent NADH:quinone oxidoreductase (198 aa).

FMN is bound by residues serine 10, 16-18, 94-97, and 138-141; these read SQS, MYNF, and TRGG.

This sequence belongs to the azoreductase type 1 family. Homodimer. The cofactor is FMN.

The enzyme catalyses 2 a quinone + NADH + H(+) = 2 a 1,4-benzosemiquinone + NAD(+). It catalyses the reaction N,N-dimethyl-1,4-phenylenediamine + anthranilate + 2 NAD(+) = 2-(4-dimethylaminophenyl)diazenylbenzoate + 2 NADH + 2 H(+). Functionally, quinone reductase that provides resistance to thiol-specific stress caused by electrophilic quinones. In terms of biological role, also exhibits azoreductase activity. Catalyzes the reductive cleavage of the azo bond in aromatic azo compounds to the corresponding amines. This is FMN-dependent NADH:quinone oxidoreductase from Shewanella baltica (strain OS185).